The sequence spans 507 residues: Sugar transport protein 8 (507 aa).

The Cytoplasmic portion of the chain corresponds to Met1–Tyr21. 12 consecutive transmembrane segments (helical) span residues Val22–Ile42, Phe79–Ser99, Ile116–Ile136, Ile139–Ile159, Gly166–Val186, Ile200–Cys220, Phe281–Phe301, Leu319–Val339, Phe346–Leu366, Leu382–Leu402, Gly419–Leu439, and Gly448–Val468. Residues Pro469–Asp507 are Cytoplasmic-facing.

This sequence belongs to the major facilitator superfamily. Sugar transporter (TC 2.A.1.1) family.

Its subcellular location is the membrane. Functionally, mediates an active uptake of hexoses, probably by sugar/hydrogen symport. In Arabidopsis thaliana (Mouse-ear cress), this protein is Sugar transport protein 8 (STP8).